Here is a 239-residue protein sequence, read N- to C-terminus: Ribosomal RNA small subunit methyltransferase G (239 aa).

S-adenosyl-L-methionine is bound by residues G79, F84, 130–131 (AE), and R149.

It belongs to the methyltransferase superfamily. RNA methyltransferase RsmG family.

Its subcellular location is the cytoplasm. Its function is as follows. Specifically methylates the N7 position of a guanine in 16S rRNA. This chain is Ribosomal RNA small subunit methyltransferase G, found in Lactobacillus johnsonii (strain CNCM I-12250 / La1 / NCC 533).